A 105-amino-acid polypeptide reads, in one-letter code: Small ribosomal subunit protein uS10c (105 aa).

The protein belongs to the universal ribosomal protein uS10 family. As to quaternary structure, part of the 30S ribosomal subunit.

The protein localises to the plastid. The protein resides in the cyanelle. In terms of biological role, involved in the binding of tRNA to the ribosomes. This Cyanophora paradoxa protein is Small ribosomal subunit protein uS10c (rps10).